A 163-amino-acid polypeptide reads, in one-letter code: C-type lectin lectoxin-Lio2 (163 aa).

The signal sequence occupies residues methionine 1 to alanine 21. Intrachain disulfides connect cysteine 25–cysteine 36, cysteine 53–cysteine 152, and cysteine 127–cysteine 144. The C-type lectin domain maps to serine 32–lysine 153. The Mannose-binding motif lies at glutamate 117 to asparagine 119. The Ca(2+) site is built by glutamate 125 and aspartate 141.

Belongs to the true venom lectin family. In terms of tissue distribution, expressed by the venom gland.

The protein localises to the secreted. Functionally, mannose-binding lectin which recognizes specific carbohydrate structures and agglutinates a variety of animal cells by binding to cell-surface glycoproteins and glycolipids. May be a calcium-dependent lectin. This Erythrolamprus poecilogyrus (Water snake) protein is C-type lectin lectoxin-Lio2.